We begin with the raw amino-acid sequence, 286 residues long: Shikimate dehydrogenase (NADP(+)) (286 aa).

Residues 21 to 23 (TLS) and Thr-68 each bind shikimate. Lys-72 functions as the Proton acceptor in the catalytic mechanism. Glu-84 serves as a coordination point for NADP(+). Shikimate contacts are provided by Asn-93 and Asp-108. NADP(+) is bound by residues 132–136 (GNGGA) and Leu-230. Tyr-232 lines the shikimate pocket. Gly-253 provides a ligand contact to NADP(+).

This sequence belongs to the shikimate dehydrogenase family. As to quaternary structure, homodimer.

The catalysed reaction is shikimate + NADP(+) = 3-dehydroshikimate + NADPH + H(+). Its pathway is metabolic intermediate biosynthesis; chorismate biosynthesis; chorismate from D-erythrose 4-phosphate and phosphoenolpyruvate: step 4/7. Functionally, involved in the biosynthesis of the chorismate, which leads to the biosynthesis of aromatic amino acids. Catalyzes the reversible NADPH linked reduction of 3-dehydroshikimate (DHSA) to yield shikimate (SA). The sequence is that of Shikimate dehydrogenase (NADP(+)) from Microcystis aeruginosa (strain NIES-843 / IAM M-2473).